A 98-amino-acid polypeptide reads, in one-letter code: U-scoloptoxin(16)-Er9a (98 aa).

The N-terminal stretch at 1–24 (MVSYLCMSVSSGWLSIGKIAIKDG) is a signal peptide.

It belongs to the scoloptoxin-16 family. In terms of processing, contains 4 disulfide bonds. In terms of tissue distribution, expressed by the venom gland.

Its subcellular location is the secreted. The polypeptide is U-scoloptoxin(16)-Er9a (Ethmostigmus rubripes (Giant centipede)).